A 58-amino-acid polypeptide reads, in one-letter code: Large ribosomal subunit protein bL32 (58 aa).

Belongs to the bacterial ribosomal protein bL32 family.

This Ligilactobacillus salivarius (strain UCC118) (Lactobacillus salivarius) protein is Large ribosomal subunit protein bL32.